Reading from the N-terminus, the 663-residue chain is Putative glucosamine-6-phosphate deaminase-like protein BT_0258 (663 aa).

Positions 1 to 290 are glucosamine-6-phosphate deaminase-like; the sequence is MKTNLSSQIT…NLTRIQRPWL (290 aa). Glu184 is a catalytic residue.

It in the N-terminal section; belongs to the glucosamine/galactosamine-6-phosphate isomerase family. NagB subfamily.

The polypeptide is Putative glucosamine-6-phosphate deaminase-like protein BT_0258 (Bacteroides thetaiotaomicron (strain ATCC 29148 / DSM 2079 / JCM 5827 / CCUG 10774 / NCTC 10582 / VPI-5482 / E50)).